The sequence spans 1396 residues: DNA-directed RNA polymerase subunit beta' (1396 aa).

Residues Cys-71, Cys-73, Cys-86, and Cys-89 each contribute to the Zn(2+) site. Asp-462, Asp-464, and Asp-466 together coordinate Mg(2+). Zn(2+) is bound by residues Cys-810, Cys-884, Cys-891, and Cys-894. Residues 1372–1382 (DEQLAQQREDA) show a composition bias toward basic and acidic residues. The interval 1372–1396 (DEQLAQQREDAMEPLPAEIALSDAE) is disordered.

This sequence belongs to the RNA polymerase beta' chain family. As to quaternary structure, the RNAP catalytic core consists of 2 alpha, 1 beta, 1 beta' and 1 omega subunit. When a sigma factor is associated with the core the holoenzyme is formed, which can initiate transcription. It depends on Mg(2+) as a cofactor. Zn(2+) is required as a cofactor.

The catalysed reaction is RNA(n) + a ribonucleoside 5'-triphosphate = RNA(n+1) + diphosphate. In terms of biological role, DNA-dependent RNA polymerase catalyzes the transcription of DNA into RNA using the four ribonucleoside triphosphates as substrates. The polypeptide is DNA-directed RNA polymerase subunit beta' (Caulobacter vibrioides (strain ATCC 19089 / CIP 103742 / CB 15) (Caulobacter crescentus)).